The primary structure comprises 496 residues: Glutamyl-tRNA(Gln) amidotransferase subunit A (496 aa).

Catalysis depends on charge relay system residues Lys79 and Ser159. Ser183 serves as the catalytic Acyl-ester intermediate.

The protein belongs to the amidase family. GatA subfamily. In terms of assembly, heterotrimer of A, B and C subunits.

It catalyses the reaction L-glutamyl-tRNA(Gln) + L-glutamine + ATP + H2O = L-glutaminyl-tRNA(Gln) + L-glutamate + ADP + phosphate + H(+). In terms of biological role, allows the formation of correctly charged Gln-tRNA(Gln) through the transamidation of misacylated Glu-tRNA(Gln) in organisms which lack glutaminyl-tRNA synthetase. The reaction takes place in the presence of glutamine and ATP through an activated gamma-phospho-Glu-tRNA(Gln). The chain is Glutamyl-tRNA(Gln) amidotransferase subunit A from Bartonella quintana (strain Toulouse) (Rochalimaea quintana).